The sequence spans 239 residues: MEGGGGGADAQAQAQPVAQAPPAMQPMQQLSRYESQKRRDWNTFLQYLRNHRPPLTLARCSGAHVIEFLKYLDQFGKTKVHASGCAYYGQPSPPAPCPCPLRQAWGSLDALIGRLRAAYEESGHAPESNPFAARAVRIYLREVRDAQAKARGIPYEKKKRKRTQQQQPPPQPPLPPQHQPGAAAGEASSSSSAAAAAVAAEGSGSSAATAAATSQTGGGGGSTTTTTASAAAPTTATRV.

2 disordered regions span residues Met-1 to Ser-35 and Lys-149 to Val-239. Low complexity predominate over residues Asp-9–Gln-29. The ALOG domain occupies Arg-32–Lys-159. Residues Lys-157 to Lys-161 carry the Nuclear localization signal motif. Residues Gln-167 to His-178 are compositionally biased toward pro residues. Low complexity-rich tracts occupy residues Gln-179–Gln-215 and Thr-223–Val-239.

The protein belongs to the plant homeotic and developmental regulators ALOG protein family.

It is found in the nucleus. Functionally, probable transcription regulator that acts as a developmental regulator by promoting cell growth in response to light. The protein is Protein G1-like8 of Oryza sativa subsp. indica (Rice).